A 151-amino-acid polypeptide reads, in one-letter code: Cell division control protein 2 homolog 2 (151 aa).

The Protein kinase domain maps to 1–151; it reads ALKEIRMDNE…IMQTLQIESL (151 aa). An ATP-binding site is contributed by lysine 3. Aspartate 113 (proton acceptor) is an active-site residue.

The protein belongs to the protein kinase superfamily. CMGC Ser/Thr protein kinase family. CDC2/CDKX subfamily.

The enzyme catalyses L-seryl-[protein] + ATP = O-phospho-L-seryl-[protein] + ADP + H(+). It catalyses the reaction L-threonyl-[protein] + ATP = O-phospho-L-threonyl-[protein] + ADP + H(+). The catalysed reaction is [DNA-directed RNA polymerase] + ATP = phospho-[DNA-directed RNA polymerase] + ADP + H(+). The polypeptide is Cell division control protein 2 homolog 2 (Pisum sativum (Garden pea)).